The chain runs to 283 residues: Myeloid differentiation primary response protein MyD88-A (283 aa).

The 79-residue stretch at 27-105 (RLCLYLNPDA…DILTDLGPLI (79 aa)) folds into the Death domain. The interval 106–143 (EADCMKYLEKKHVPLPIQDDKVDSSEQYRITKSDDPYG) is intermediate domain. Residues 147–281 (ETFDAFICYC…WFWDKLAKAL (135 aa)) form the TIR domain.

Its subcellular location is the cytoplasm. Functionally, adapter protein involved in the Toll-like receptor and IL-1 receptor signaling pathway in the innate immune response. Activates expression of target genes in the Spemann organizer region during early embryonic development. Is required for normal axis formation. The polypeptide is Myeloid differentiation primary response protein MyD88-A (myd88-a) (Xenopus laevis (African clawed frog)).